A 306-amino-acid polypeptide reads, in one-letter code: MSKTAASSAVDASQAGTVKVGDMVVNRMGFGAMRVTGDGIWDEPKDKEACIATLKRLPELNINFIDTADSYGPEVSENLLREALYPYKGLIIATKGGLVRTGPNEWHPCGAPKFLRQEVLMSMRRLGVKQIDLWQLHRIDPKVPRKDQFSEIAAMKKEGLIRHVGLSEVTVDDIKEAEQYFPVVSVQNLFNLVNRKNEKVLEYCEQKGIAFIPWYPLASGALAKPGTILDAVSKDLDRSTSQIALSWVLQRSPVMLPIPGTSKVDHLEENVKAAGIQLSSEVFAKLDEEGKSEDAKRQEEEKKKSS.

The segment at 287–306 (DEEGKSEDAKRQEEEKKKSS) is disordered.

It belongs to the aldo/keto reductase family.

It localises to the cytoplasm. Its subcellular location is the nucleus. This is an uncharacterized protein from Schizosaccharomyces pombe (strain 972 / ATCC 24843) (Fission yeast).